We begin with the raw amino-acid sequence, 244 residues long: Protein A47 (244 aa).

It belongs to the orthopoxvirus A47 protein family.

The protein is Protein A47 of Homo sapiens (Human).